Here is a 93-residue protein sequence, read N- to C-terminus: Conidiation-specific protein 6 (93 aa).

The segment at 1–93 (MSDFENKNPN…HAKKKLDGLE (93 aa)) is disordered. Tandem repeats lie at residues 7-37 (KNPN…KKVL) and 59-89 (KNPG…KKKL). Residues 7 to 89 (KNPNNVLGGH…EAKEHAKKKL (83 aa)) form a 2 X 30 AA approximate repeats region. Basic and acidic residues-rich tracts occupy residues 27–37 (EEAKEHSKKVL) and 77–93 (VSDE…DGLE).

This sequence belongs to the UPF0654 (con-6) family.

Functionally, may protect dormant spores from desiccation and play a significant role in the formation or survival of microconidia and ascospores. The polypeptide is Conidiation-specific protein 6 (con-6) (Neurospora crassa (strain ATCC 24698 / 74-OR23-1A / CBS 708.71 / DSM 1257 / FGSC 987)).